The primary structure comprises 124 residues: Large ribosomal subunit protein bL12 (124 aa).

The protein belongs to the bacterial ribosomal protein bL12 family. In terms of assembly, homodimer. Part of the ribosomal stalk of the 50S ribosomal subunit. Forms a multimeric L10(L12)X complex, where L10 forms an elongated spine to which 2 to 4 L12 dimers bind in a sequential fashion. Binds GTP-bound translation factors.

Its function is as follows. Forms part of the ribosomal stalk which helps the ribosome interact with GTP-bound translation factors. Is thus essential for accurate translation. The sequence is that of Large ribosomal subunit protein bL12 from Cupriavidus metallidurans (strain ATCC 43123 / DSM 2839 / NBRC 102507 / CH34) (Ralstonia metallidurans).